The sequence spans 111 residues: UPF0339 protein BP0521 (111 aa).

2 consecutive repeat copies span residues 9–57 and 60–108. The segment at 86 to 111 is disordered; it reads TQARDNGIASVKSNAPGAPTKDQTQA.

It belongs to the UPF0339 family. Duplicated subfamily.

This is UPF0339 protein BP0521 from Bordetella pertussis (strain Tohama I / ATCC BAA-589 / NCTC 13251).